Here is a 450-residue protein sequence, read N- to C-terminus: Ribosomal protein uS12 methylthiotransferase RimO (450 aa).

Residues 16-126 (PRISFVSLGC…VLDAVHQAVP (111 aa)) enclose the MTTase N-terminal domain. [4Fe-4S] cluster-binding residues include C25, C61, C90, C157, C161, and C164. In terms of domain architecture, Radical SAM core spans 143–380 (LTPRHYAYLK…MLKQQAISAR (238 aa)). In terms of domain architecture, TRAM spans 383-449 (KRKVGTRQQV…AYDLIGSAVG (67 aa)).

It belongs to the methylthiotransferase family. RimO subfamily. [4Fe-4S] cluster is required as a cofactor.

The protein localises to the cytoplasm. It carries out the reaction L-aspartate(89)-[ribosomal protein uS12]-hydrogen + (sulfur carrier)-SH + AH2 + 2 S-adenosyl-L-methionine = 3-methylsulfanyl-L-aspartate(89)-[ribosomal protein uS12]-hydrogen + (sulfur carrier)-H + 5'-deoxyadenosine + L-methionine + A + S-adenosyl-L-homocysteine + 2 H(+). Its function is as follows. Catalyzes the methylthiolation of an aspartic acid residue of ribosomal protein uS12. This chain is Ribosomal protein uS12 methylthiotransferase RimO, found in Azorhizobium caulinodans (strain ATCC 43989 / DSM 5975 / JCM 20966 / LMG 6465 / NBRC 14845 / NCIMB 13405 / ORS 571).